We begin with the raw amino-acid sequence, 132 residues long: Large ribosomal subunit protein uL22c (132 aa).

It belongs to the universal ribosomal protein uL22 family. In terms of assembly, part of the 50S ribosomal subunit.

The protein localises to the plastid. Its subcellular location is the chloroplast. Functionally, this protein binds specifically to 23S rRNA. Its function is as follows. The globular domain of the protein is located near the polypeptide exit tunnel on the outside of the subunit, while an extended beta-hairpin is found that lines the wall of the exit tunnel in the center of the 70S ribosome. The sequence is that of Large ribosomal subunit protein uL22c (rpl22) from Populus alba (White poplar).